A 47-amino-acid chain; its full sequence is PhoP/PhoQ regulator MgrB (47 aa).

A helical membrane pass occupies residues 6–26; the sequence is WVILIIVALVCLLLWAQVFNI.

This sequence belongs to the MgrB family. May form homooligomers. Probably interacts with the periplasmic domain of PhoQ.

The protein resides in the cell inner membrane. In terms of biological role, phoP-regulated transcription is redox-sensitive, being activated when the periplasm becomes more reducing. MgrB acts between DsbA/DsbB and PhoP/PhoQ in this pathway. Represses PhoP/PhoQ signaling, possibly by binding to the periplasmic domain of PhoQ, altering its activity and that of downstream effector PhoP. The chain is PhoP/PhoQ regulator MgrB from Citrobacter koseri (strain ATCC BAA-895 / CDC 4225-83 / SGSC4696).